A 501-amino-acid polypeptide reads, in one-letter code: Pre-mRNA-splicing factor 38B (501 aa).

Positions 1-11 (MAGSQQQQQQQ) are enriched in low complexity. Disordered stretches follow at residues 1–28 (MAGS…LPLW) and 208–501 (DQHM…ADSP). The segment covering 243–273 (GDKRRSRTPRRSPSPRKSQNRSRSRSHHRER) has biased composition (basic residues). The stretch at 281-302 (ELERERDRQRKEREGKDRDRDR) forms a coiled coil. Residues 281 to 328 (ELERERDRQRKEREGKDRDRDRDRDRERDRERDRDRRRSRTPDRNAER) are compositionally biased toward basic and acidic residues. Over residues 329–341 (RRSRSRERRRSRS) the composition is skewed to basic residues. Positions 342–408 (TSRDKRTERK…EEKKHREEKR (67 aa)) are enriched in basic and acidic residues. Residues 409–435 (SKRSRSRSRDRKHKAERSSKKRSRSGS) show a composition bias toward basic residues. Over residues 437 to 447 (SRQEAGEEKNR) the composition is skewed to basic and acidic residues. A compositionally biased stretch (basic residues) spans 448 to 468 (KRERSHSKDRQHKRSRSKERS). A compositionally biased stretch (basic and acidic residues) spans 469-491 (HRRESSNERIHARQERPSSESGE). A compositionally biased stretch (polar residues) spans 492–501 (RTNSVRADSP).

Belongs to the PRP38 family.

The protein localises to the nucleus. In terms of biological role, may be required for pre-mRNA splicing. This chain is Pre-mRNA-splicing factor 38B (prpf38b), found in Danio rerio (Zebrafish).